A 98-amino-acid polypeptide reads, in one-letter code: Large ribosomal subunit protein uL23 (98 aa).

It belongs to the universal ribosomal protein uL23 family. Part of the 50S ribosomal subunit. Contacts protein L29, and trigger factor when it is bound to the ribosome.

In terms of biological role, one of the early assembly proteins it binds 23S rRNA. One of the proteins that surrounds the polypeptide exit tunnel on the outside of the ribosome. Forms the main docking site for trigger factor binding to the ribosome. The protein is Large ribosomal subunit protein uL23 of Limosilactobacillus reuteri (strain DSM 20016) (Lactobacillus reuteri).